The sequence spans 136 residues: Peptide deformylase (136 aa).

Fe cation contacts are provided by Cys-85 and His-126. Glu-127 is an active-site residue. His-130 contacts Fe cation.

Belongs to the polypeptide deformylase family. It depends on Fe(2+) as a cofactor.

The enzyme catalyses N-terminal N-formyl-L-methionyl-[peptide] + H2O = N-terminal L-methionyl-[peptide] + formate. Functionally, removes the formyl group from the N-terminal Met of newly synthesized proteins. Requires at least a dipeptide for an efficient rate of reaction. N-terminal L-methionine is a prerequisite for activity but the enzyme has broad specificity at other positions. The chain is Peptide deformylase from Clostridium beijerinckii (strain ATCC 51743 / NCIMB 8052) (Clostridium acetobutylicum).